Reading from the N-terminus, the 141-residue chain is Large ribosomal subunit protein uL11 (141 aa).

It belongs to the universal ribosomal protein uL11 family. In terms of assembly, part of the ribosomal stalk of the 50S ribosomal subunit. Interacts with L10 and the large rRNA to form the base of the stalk. L10 forms an elongated spine to which L12 dimers bind in a sequential fashion forming a multimeric L10(L12)X complex.

Functionally, forms part of the ribosomal stalk which helps the ribosome interact with GTP-bound translation factors. This chain is Large ribosomal subunit protein uL11, found in Acidianus ambivalens (Desulfurolobus ambivalens).